Reading from the N-terminus, the 224-residue chain is Superoxide dismutase [Mn], mitochondrial (224 aa).

The transit peptide at 1 to 20 (MLLARAFARRSLRAGLWCRQ) directs the protein to the mitochondrion. Mn(2+) contacts are provided by histidine 46, histidine 94, aspartate 177, and histidine 181.

It belongs to the iron/manganese superoxide dismutase family. In terms of assembly, homotetramer. It depends on Mn(2+) as a cofactor.

The protein resides in the mitochondrion matrix. It carries out the reaction 2 superoxide + 2 H(+) = H2O2 + O2. In terms of biological role, destroys superoxide anion radicals which are normally produced within the cells and which are toxic to biological systems. This Charybdis feriata (Crucifix crab) protein is Superoxide dismutase [Mn], mitochondrial.